Consider the following 440-residue polypeptide: Xylose isomerase (440 aa).

Active-site residues include histidine 101 and aspartate 104. Mg(2+)-binding residues include glutamate 232, glutamate 268, histidine 271, aspartate 296, aspartate 307, aspartate 309, and aspartate 339.

Belongs to the xylose isomerase family. As to quaternary structure, homotetramer. Mg(2+) serves as cofactor.

The protein localises to the cytoplasm. The enzyme catalyses alpha-D-xylose = alpha-D-xylulofuranose. The polypeptide is Xylose isomerase (Salmonella typhi).